A 206-amino-acid polypeptide reads, in one-letter code: MLPCAAGARGRGAMVVLRAGKKTFLPPLCRAFACRGCQLAPERGAERRDTAPSGVSRFCPPRKSCHDWIGPPDKYSNLRPVHFYIPENESPLEQKLRKLRQETQEWNQQFWANQNLTFSKEKEEFIHSRLKTKGLGLRTESGQKATLNAEEMADFYKEFLSKNFQKHMYYNRDWYKRNFAITFFMGKVALERIWNKLKQKQKKRSN.

The transit peptide at 1–39 (MLPCAAGARGRGAMVVLRAGKKTFLPPLCRAFACRGCQL) directs the protein to the mitochondrion.

It belongs to the COA8 family. In terms of processing, N-terminal mitochondrial targeting sequence is cleaved from the mature protein once in the mitochondrion. Post-translationally, in normal conditions, the cytoplasmic precursor protein is rapidly degraded by the ubiquitination-proteasome system (UPS). Oxidative stress induces protein stabilization and import into mitochondria where it protects COX from degradation. Expressed in fibroblasts.

The protein resides in the mitochondrion inner membrane. Required for cytochrome c complex (COX) IV assembly and function Protects COX assembly from oxidation-induced degradation, COX being the terminal component of the mitochondrial respiratory chain. The sequence is that of Cytochrome c oxidase assembly factor 8 from Homo sapiens (Human).